The following is a 359-amino-acid chain: DNA replication and repair protein RecF (359 aa).

An ATP-binding site is contributed by 30-37 (GPNGSGKT).

The protein belongs to the RecF family.

It localises to the cytoplasm. Its function is as follows. The RecF protein is involved in DNA metabolism; it is required for DNA replication and normal SOS inducibility. RecF binds preferentially to single-stranded, linear DNA. It also seems to bind ATP. The chain is DNA replication and repair protein RecF from Aliivibrio fischeri (strain MJ11) (Vibrio fischeri).